The chain runs to 160 residues: Probable dihydroneopterin aldolase 3 (160 aa).

Substrate contacts are provided by residues Glu59, Phe91, and 110-111 (YE). Lys137 (proton donor/acceptor) is an active-site residue.

The protein belongs to the DHNA family. As to quaternary structure, homooctamer. Forms a hollow cylinder assembled from two ring-shaped tetramers. In terms of tissue distribution, expressed at very low levels in siliques.

It catalyses the reaction 7,8-dihydroneopterin = 6-hydroxymethyl-7,8-dihydropterin + glycolaldehyde. It functions in the pathway cofactor biosynthesis; tetrahydrofolate biosynthesis; 2-amino-4-hydroxy-6-hydroxymethyl-7,8-dihydropteridine diphosphate from 7,8-dihydroneopterin triphosphate: step 3/4. Its function is as follows. Catalyzes the conversion of 7,8-dihydroneopterin into 6-hydroxymethyl-7,8-dihydropterin, a biosynthetic precursor of the vitamin tetrahydrofolate. Can use L-threo-dihydroneopterin and D-erythro-dihydroneopterin as substrates for the formation of 6-hydroxymethyldihydropterin, but it can also catalyze the epimerization of carbon 2' of dihydroneopterin and dihydromonapterin. The sequence is that of Probable dihydroneopterin aldolase 3 from Arabidopsis thaliana (Mouse-ear cress).